Here is a 64-residue protein sequence, read N- to C-terminus: Alpha-conotoxin-like Ac1.1b (64 aa).

Positions 1 to 21 (MGMRMMFTLFLLVVLTTTVVS) are cleaved as a signal peptide. A propeptide spanning residues 22-47 (FPSDSASDGRDDEAKDERSDMYKSKR) is cleaved from the precursor. The interval 23–46 (PSDSASDGRDDEAKDERSDMYKSK) is disordered. Positions 28–44 (SDGRDDEAKDERSDMYK) are enriched in basic and acidic residues. Cystine bridges form between Cys-51–Cys-56 and Cys-52–Cys-62. Cys-62 bears the Cysteine amide mark.

It belongs to the conotoxin A superfamily. Expressed by the venom duct.

The protein resides in the secreted. Its function is as follows. Alpha-conotoxins act on postsynaptic membranes, they bind to the nicotinic acetylcholine receptors (nAChR) and thus inhibit them. In Conus achatinus (Little frog cone), this protein is Alpha-conotoxin-like Ac1.1b.